The primary structure comprises 127 residues: Histone H2B type 1-A (127 aa).

The disordered stretch occupies residues 1–32 (MPEVSAKGTTISKKGFKKAVTKTQKKEGRKRK). Proline 2 is modified (N-acetylproline). N6-acetyllysine; alternate is present on residues lysine 7, lysine 13, lysine 14, lysine 17, lysine 18, lysine 22, and lysine 25. N6-crotonyllysine; alternate is present on residues lysine 7, lysine 13, lysine 14, lysine 17, lysine 18, lysine 22, lysine 25, and lysine 36. N6-lactoyllysine; alternate occurs at positions 7 and 13. A Glycyl lysine isopeptide (Lys-Gly) (interchain with G-Cter in SUMO2); alternate cross-link involves residue lysine 7. An N6-lactoyllysine; alternate mark is found at lysine 17, lysine 18, lysine 22, and lysine 25. Lysine 22 is covalently cross-linked (Glycyl lysine isopeptide (Lys-Gly) (interchain with G-Cter in SUMO2); alternate). An N6-succinyllysine; alternate modification is found at lysine 36. A Glycyl lysine isopeptide (Lys-Gly) (interchain with G-Cter in ubiquitin); alternate cross-link involves residue lysine 36. Serine 38 carries the phosphoserine modification. The residue at position 45 (lysine 45) is an N6-lactoyllysine; alternate. Lysine 48 bears the N6-methyllysine mark. Lysine 59 carries the N6,N6-dimethyllysine modification. Arginine 81 is subject to Dimethylated arginine. An N6-acetyllysine; alternate modification is found at lysine 87. Lysine 87 is subject to N6-lactoyllysine; alternate. Lysine 87 carries the post-translational modification N6,N6,N6-trimethyllysine; alternate. Residues arginine 88 and arginine 94 each carry the omega-N-methylarginine modification. Lysine 110 is subject to N6-lactoyllysine; alternate. Lysine 110 carries the post-translational modification N6-methyllysine. Threonine 117 bears the Phosphothreonine mark. N6-lactoyllysine; alternate is present on residues lysine 118 and lysine 122. Residues lysine 118 and lysine 122 each carry the N6-succinyllysine; alternate modification. Lysine 118 carries the N6-methylated lysine; alternate modification. Lysine 122 participates in a covalent cross-link: Glycyl lysine isopeptide (Lys-Gly) (interchain with G-Cter in ubiquitin); alternate.

It belongs to the histone H2B family. In terms of assembly, the nucleosome is a histone octamer containing two molecules each of H2A, H2B, H3 and H4 assembled in one H3-H4 heterotetramer and two H2A-H2B heterodimers. Monoubiquitination at Lys-36 by the MSL1/MSL2 dimer is required for histone H3 'Lys-4' (H3K4me) and 'Lys-79' (H3K79me) methylation and transcription activation at specific gene loci, such as HOXA9 and MEIS1 loci. Similarly, monoubiquitination of Lys-122 (H2BK120Ub) by the RNF20/40 complex gives a specific tag for epigenetic transcriptional activation and is also prerequisite for histone H3 'Lys-4' and 'Lys-79' methylation. It also functions cooperatively with the FACT dimer to stimulate elongation by RNA polymerase II. H2BK120Ub also acts as a regulator of mRNA splicing: deubiquitination by USP49 is required for efficient cotranscriptional splicing of a large set of exons. Post-translationally, crotonylation (Kcr) is specifically present in male germ cells and marks testis-specific genes in post-meiotic cells, including X-linked genes that escape sex chromosome inactivation in haploid cells. Crotonylation marks active promoters and enhancers and confers resistance to transcriptional repressors. It is also associated with post-meiotically activated genes on autosomes. In terms of processing, acetylated during spermatogenesis. Acetylated form is most abundant in spermatogonia compared to spermatocytes and round spermatids. Phosphorylated at Thr-117 in spermatogonia, spermatocytes and round spermatids. Post-translationally, methylated at Lys-118 in spermatogonia, spermatocytes and round spermatids. In terms of processing, lactylated in macrophages by EP300/P300 by using lactoyl-CoA directly derived from endogenous or exogenous lactate, leading to stimulates gene transcription. Testis. Expressed in pachytene spermatocytes during meiotic prophase I in the absence of any significant DNA synthesis.

The protein resides in the nucleus. Its subcellular location is the chromosome. Functionally, variant histone specifically required to direct the transformation of dissociating nucleosomes to protamine in male germ cells. Entirely replaces classical histone H2B prior nucleosome to protamine transition and probably acts as a nucleosome dissociating factor that creates a more dynamic chromatin, facilitating the large-scale exchange of histones. Core component of nucleosome. Nucleosomes wrap and compact DNA into chromatin, limiting DNA accessibility to the cellular machineries which require DNA as a template. Histones thereby play a central role in transcription regulation, DNA repair, DNA replication and chromosomal stability. DNA accessibility is regulated via a complex set of post-translational modifications of histones, also called histone code, and nucleosome remodeling. This chain is Histone H2B type 1-A, found in Rattus norvegicus (Rat).